A 486-amino-acid chain; its full sequence is UDP-N-acetylglucosamine pyrophosphorylase (486 aa).

A Substrate binding motif is present at residues 109–112; sequence MAGG. UTP-binding positions include 109–112, Lys-123, Gln-199, and Gly-226; that span reads MAGG. Asn-227 serves as a coordination point for substrate. Asp-257 is a binding site for UTP. Residues 309–310 carry the Substrate binding motif; that stretch reads EY. Position 389 (Lys-389) interacts with UTP. Lys-421 lines the substrate pocket.

The protein belongs to the UDPGP type 1 family.

Its subcellular location is the cytoplasm. It catalyses the reaction N-acetyl-alpha-D-glucosamine 1-phosphate + UTP + H(+) = UDP-N-acetyl-alpha-D-glucosamine + diphosphate. It functions in the pathway nucleotide-sugar biosynthesis; UDP-N-acetyl-alpha-D-glucosamine biosynthesis; UDP-N-acetyl-alpha-D-glucosamine from N-acetyl-alpha-D-glucosamine 1-phosphate: step 1/1. The chain is UDP-N-acetylglucosamine pyrophosphorylase (UAP1) from Candida albicans (Yeast).